The chain runs to 416 residues: Tyrosine--tRNA ligase (416 aa).

L-tyrosine is bound at residue Tyr-34. Positions 39–48 (PTGDSLHIGH) match the 'HIGH' region motif. L-tyrosine contacts are provided by Tyr-165 and Gln-169. A 'KMSKS' region motif is present at residues 227 to 231 (KFGKT). Lys-230 is an ATP binding site. The S4 RNA-binding domain maps to 349–416 (KNIVEWLVDT…KKKYFLARVK (68 aa)).

The protein belongs to the class-I aminoacyl-tRNA synthetase family. TyrS type 1 subfamily. Homodimer.

Its subcellular location is the cytoplasm. The enzyme catalyses tRNA(Tyr) + L-tyrosine + ATP = L-tyrosyl-tRNA(Tyr) + AMP + diphosphate + H(+). Catalyzes the attachment of tyrosine to tRNA(Tyr) in a two-step reaction: tyrosine is first activated by ATP to form Tyr-AMP and then transferred to the acceptor end of tRNA(Tyr). The polypeptide is Tyrosine--tRNA ligase (Ligilactobacillus salivarius (strain UCC118) (Lactobacillus salivarius)).